A 591-amino-acid chain; its full sequence is V-type ATP synthase alpha chain (591 aa).

ATP is bound at residue 233-240; that stretch reads GPFGAGKT.

The protein belongs to the ATPase alpha/beta chains family.

The catalysed reaction is ATP + H2O + 4 H(+)(in) = ADP + phosphate + 5 H(+)(out). Functionally, produces ATP from ADP in the presence of a proton gradient across the membrane. The V-type alpha chain is a catalytic subunit. In Streptococcus pneumoniae (strain ATCC 700669 / Spain 23F-1), this protein is V-type ATP synthase alpha chain.